We begin with the raw amino-acid sequence, 383 residues long: MKNKLPPFIEIYRALIATPSISATEEALDQSNADLITLLADWFKDLGFNVEVQPVPGTRNKFNMLASTGQGAGGLLLAGHTDTVPFDDGRWTRDPFTLTEHDGKLYGLGTADMKGFFAFILDALRDVDVTKLKKPLYILATADEETSMAGARYFAETTALRPDCAIIGEPTSLQPVRAHKGHISNAIRIQGQSGHSSDPARGVNAIELMHDAIGHILQLRDNLKERYHYEAFTVPYPTLNLGHIHGGDASNRICAWCELHMDIRPLPGMTLNELNGLLNDALAPVSERWPGRLTVDELHPPIPGYECPPNHQLVEVVEKLLGAKTEVVNYCTEAPFIQTLCPTLVLGPGSINQAHQPDEYLETRFIKPTRELITQVIHHFCWH.

Histidine 80 provides a ligand contact to Zn(2+). The active site involves aspartate 82. Residue aspartate 112 coordinates Zn(2+). Residue glutamate 144 is part of the active site. 3 residues coordinate Zn(2+): glutamate 145, glutamate 169, and histidine 355.

It belongs to the peptidase M20A family. ArgE subfamily. In terms of assembly, homodimer. Requires Zn(2+) as cofactor. The cofactor is Co(2+). It depends on glutathione as a cofactor.

The protein resides in the cytoplasm. The catalysed reaction is N(2)-acetyl-L-ornithine + H2O = L-ornithine + acetate. It functions in the pathway amino-acid biosynthesis; L-arginine biosynthesis; L-ornithine from N(2)-acetyl-L-ornithine (linear): step 1/1. Catalyzes the hydrolysis of the amide bond of N(2)-acetylated L-amino acids. Cleaves the acetyl group from N-acetyl-L-ornithine to form L-ornithine, an intermediate in L-arginine biosynthesis pathway, and a branchpoint in the synthesis of polyamines. This chain is Acetylornithine deacetylase, found in Escherichia coli O157:H7.